A 149-amino-acid chain; its full sequence is Secreted RxLR effector protein 47 (149 aa).

An N-terminal signal peptide occupies residues 1 to 22 (MICLLPLIAVMLFVFATHTVLA). The short motif at 57-79 (RFLRQETTFEEKPSVNDVHAEER) is the RxLR-dEER element.

The protein belongs to the RxLR effector family.

It localises to the secreted. The protein resides in the host membrane. Its function is as follows. Secreted effector that completely suppresses the host cell death induced by cell death-inducing proteins. In Plasmopara viticola (Downy mildew of grapevine), this protein is Secreted RxLR effector protein 47.